Here is a 473-residue protein sequence, read N- to C-terminus: Siroheme synthase (473 aa).

A precorrin-2 dehydrogenase /sirohydrochlorin ferrochelatase region spans residues 1–203; the sequence is MTLFPIFADL…QQPGLAEQEL (203 aa). Residues 22–23 and 43–44 each bind NAD(+); these read AV and PR. S128 is modified (phosphoserine). The interval 216 to 473 is uroporphyrinogen-III C-methyltransferase; sequence GSVVLVGAGP…GLPGPQALAA (258 aa). P225 provides a ligand contact to S-adenosyl-L-methionine. D248 acts as the Proton acceptor in catalysis. Residue K270 is the Proton donor of the active site. S-adenosyl-L-methionine-binding positions include 302–304, I307, 332–333, M384, and G413; these read GGD and TA.

In the N-terminal section; belongs to the precorrin-2 dehydrogenase / sirohydrochlorin ferrochelatase family. It in the C-terminal section; belongs to the precorrin methyltransferase family.

The catalysed reaction is uroporphyrinogen III + 2 S-adenosyl-L-methionine = precorrin-2 + 2 S-adenosyl-L-homocysteine + H(+). It carries out the reaction precorrin-2 + NAD(+) = sirohydrochlorin + NADH + 2 H(+). It catalyses the reaction siroheme + 2 H(+) = sirohydrochlorin + Fe(2+). The protein operates within cofactor biosynthesis; adenosylcobalamin biosynthesis; precorrin-2 from uroporphyrinogen III: step 1/1. It participates in cofactor biosynthesis; adenosylcobalamin biosynthesis; sirohydrochlorin from precorrin-2: step 1/1. It functions in the pathway porphyrin-containing compound metabolism; siroheme biosynthesis; precorrin-2 from uroporphyrinogen III: step 1/1. Its pathway is porphyrin-containing compound metabolism; siroheme biosynthesis; siroheme from sirohydrochlorin: step 1/1. The protein operates within porphyrin-containing compound metabolism; siroheme biosynthesis; sirohydrochlorin from precorrin-2: step 1/1. In terms of biological role, multifunctional enzyme that catalyzes the SAM-dependent methylations of uroporphyrinogen III at position C-2 and C-7 to form precorrin-2 via precorrin-1. Then it catalyzes the NAD-dependent ring dehydrogenation of precorrin-2 to yield sirohydrochlorin. Finally, it catalyzes the ferrochelation of sirohydrochlorin to yield siroheme. In Bordetella parapertussis (strain 12822 / ATCC BAA-587 / NCTC 13253), this protein is Siroheme synthase.